Reading from the N-terminus, the 842-residue chain is ATP-binding cassette sub-family B member 6 (842 aa).

The Lumenal segment spans residues 1-26 (MVTVGNYCETEGPAGPAWTQNGLSPC). A required for the lysosomal targeting region spans residues 1-205 (MVTVGNYCET…SGGLFILGLW (205 aa)). The required for ATPase activity stretch occupies residues 1 to 236 (MVTVGNYCET…GNQGRSTDRR (236 aa)). C8 and C26 form a disulfide bridge. Residues 27–47 (FFFTLVPSTLLTLGVLALVLV) traverse the membrane as a helical segment. At 48–72 (LPRRRREVPAGPEELSWAAGPRVAP) the chain is on the cytoplasmic side. Residues 73–93 (YVLQLFLATLQMALPLAGLAG) traverse the membrane as a helical segment. At 94–106 (RVGTARGVRLPGY) the chain is on the lumenal side. A helical membrane pass occupies residues 107–127 (LLLASVLESLASVCGLWLLVV). Topologically, residues 128-147 (ERSQARQSLAMGVWMKFRHS) are cytoplasmic. A helical transmembrane segment spans residues 148 to 168 (LGLLLLWTVTFAAENLALVSW). The Lumenal segment spans residues 169 to 185 (NSPQWWWARADLGQQVQ). Residues 186–206 (FGLWVLRYVTSGGLFILGLWA) traverse the membrane as a helical segment. Topologically, residues 207 to 263 (PGLRPQSYTLHVHEEDQDVGGNQGRSTDRRSTWRDLGRKLRLLSSYLWPRGSPSLQL) are cytoplasmic. Residues 264 to 284 (IVLICLGLMGLERALNVLVPI) traverse the membrane as a helical segment. Residues 265-556 (VLICLGLMGL…FGTYYRMIQT (292 aa)) form the ABC transmembrane type-1 domain. The Lumenal segment spans residues 285–291 (FYRDIVN). The chain crosses the membrane as a helical span at residues 292–312 (LLTAKAPWSSLAWTVTTYVFL). Residues 313–375 (KFLQGGGTGS…TGEVLRIVDR (63 aa)) are Cytoplasmic-facing. A helical transmembrane segment spans residues 376–396 (GTSSVTGLLSYLVFSIIPTLA). D397 is a topological domain (lumenal). A helical membrane pass occupies residues 398-418 (IIIGIIYFSMFFNAWFGLIVF). The Cytoplasmic portion of the chain corresponds to 419–499 (LCMSLYLILT…STASLVVLNQ (81 aa)). The helical transmembrane segment at 500–520 (TQNLVIGLGLLAGSLLCAYFV) threads the bilayer. Over 521-529 (SEQKLQVGD) the chain is Lumenal. The chain crosses the membrane as a helical span at residues 530–550 (FVLFGTYITQLYMPLNWFGTY). Residues 551–842 (YRMIQTNFID…PEESKPQDTA (292 aa)) are Cytoplasmic-facing. In terms of domain architecture, ABC transporter spans 590–824 (IEFENVHFSY…GGVYAEMWQL (235 aa)). ATP contacts are provided by residues Y599 and 623 to 634 (GPSGAGKSTILR).

The protein belongs to the ABC transporter superfamily. ABCB family. Heavy Metal importer (TC 3.A.1.210) subfamily. As to quaternary structure, homodimer. In terms of processing, N-glycosylated.

Its subcellular location is the cell membrane. It is found in the mitochondrion outer membrane. The protein localises to the endoplasmic reticulum membrane. The protein resides in the golgi apparatus membrane. It localises to the endosome membrane. Its subcellular location is the lysosome membrane. It is found in the late endosome membrane. The protein localises to the early endosome membrane. The protein resides in the secreted. It localises to the extracellular exosome. Its subcellular location is the mitochondrion. It is found in the endosome. The protein localises to the multivesicular body membrane. The protein resides in the melanosome membrane. It catalyses the reaction coproporphyrin III(in) + ATP + H2O = coproporphyrin III(out) + ADP + phosphate + H(+). It carries out the reaction coproporphyrinogen III(in) + ATP + H2O = coproporphyrinogen III(out) + ADP + phosphate + H(+). The catalysed reaction is heme b(in) + ATP + H2O = heme b(out) + ADP + phosphate + H(+). The enzyme catalyses pheophorbide a(in) + ATP + H2O = pheophorbide a(out) + ADP + phosphate + H(+). It catalyses the reaction protoporphyrin IX(in) + ATP + H2O = protoporphyrin IX(out) + ADP + phosphate + H(+). It carries out the reaction coproporphyrin I(in) + ATP + H2O = coproporphyrin I(out) + ADP + phosphate + H(+). The catalysed reaction is uroporphyrin I(in) + ATP + H2O = uroporphyrin I(out) + ADP + phosphate + H(+). The enzyme catalyses uroporphyrin III(in) + ATP + H2O = uroporphyrin III(out) + ADP + phosphate + H(+). In terms of biological role, ATP-dependent transporter that catalyzes the transport of a broad-spectrum of porphyrins from the cytoplasm to the extracellular space through the plasma membrane or into the vesicle lumen. May also function as an ATP-dependent importer of porphyrins from the cytoplasm into the mitochondria, in turn may participate in the de novo heme biosynthesis regulation and in the coordination of heme and iron homeostasis during phenylhydrazine stress. May play a key role in the early steps of melanogenesis producing PMEL amyloid fibrils. In vitro, it confers to cells a resistance to toxic metal such as arsenic and cadmium and against chemotherapeutics agent such as 5-fluorouracil, SN-38 and vincristin. In addition may play a role in the transition metal homeostasis. The chain is ATP-binding cassette sub-family B member 6 from Mus musculus (Mouse).